Consider the following 460-residue polypeptide: MLTIYNTLSKTKETFKPLDGNNVRMYVCGMTVYDYCHLGHGRSMVAFDLITRWLRKSGYALTYVRNITDIDDKIINRANENGESFDALTARMIDAMHEDERRLSILKPDLEPRATDHIPGMHAMIQTLIDKGYAYAPGNGDVYYRVGKFAGYGKLSRKKIEDLRIGARIEVGESKQDPLDFVLWKGAKPGEPFWDSPWGPGRPGWHIECSVMSTCCLGESFDIHGGGSDLEFPHHENEIAQSEAATGKPYANAWMHCGMIRINGEKMSKSLNNFFTIRDVLDKYHPEVVRYLLVASHYRSAINYSEDSLRDSKGALERFYHALRGLPRVAAKGGEAFVERFTVAMNDDFGTPEACAVLFDLVREINRLRESDVEAAAGLAGRLRELGDVLGVLQLDADEFLRAGAEGKVDAAQVEALIQARLQARADKNWAESDRIRDQITAMGVVLEDGKGGTTWRLAD.

Zn(2+) is bound at residue C28. A 'HIGH' region motif is present at residues 30–40 (MTVYDYCHLGH). Residues C209, H234, and E238 each contribute to the Zn(2+) site. The short motif at 266 to 270 (KMSKS) is the 'KMSKS' region element. Residue K269 participates in ATP binding.

It belongs to the class-I aminoacyl-tRNA synthetase family. Monomer. It depends on Zn(2+) as a cofactor.

The protein localises to the cytoplasm. It carries out the reaction tRNA(Cys) + L-cysteine + ATP = L-cysteinyl-tRNA(Cys) + AMP + diphosphate. In Pseudomonas entomophila (strain L48), this protein is Cysteine--tRNA ligase.